The following is a 407-amino-acid chain: BMP-like protein unc-129 (407 aa).

The signal sequence occupies residues 1-18; that stretch reads MRRLPIVLLLSVFSIANC. 3 N-linked (GlcNAc...) asparagine glycosylation sites follow: asparagine 27, asparagine 42, and asparagine 211. The segment at 252–283 is disordered; it reads DDREPIKRKNGKKNSLSEEISSEDVWQGFGEE. N-linked (GlcNAc...) asparagine glycosylation is present at asparagine 395.

Belongs to the TGF-beta family. As to quaternary structure, interacts with netrin receptor unc-5; the interaction is direct.

The protein resides in the secreted. It localises to the extracellular space. In terms of biological role, required for the migration of axonal growth-cones and distal tip cells (DTC) along the dorsal-ventral axis of the body wall. Acts cell nonautonomously and independently of the classical daf-4, sma-6 or daf-1 TGFbeta receptor signaling. During axon migration, facilitates long-range repulsive guidance of unc-6/netrin by enhancing unc-5-unc-40 signaling at the expense of unc-5 alone signaling, probably through direct interaction with receptor unc-5. Involved in cell-cell contact formation in sensory rays in the developing male tail, via a pathway involving plx-2 and mab-20/semaphorin-2A. This Caenorhabditis elegans protein is BMP-like protein unc-129.